A 150-amino-acid polypeptide reads, in one-letter code: Macrodomain Ter protein (150 aa).

This sequence belongs to the MatP family. Homodimer.

The protein localises to the cytoplasm. Its function is as follows. Required for spatial organization of the terminus region of the chromosome (Ter macrodomain) during the cell cycle. Prevents early segregation of duplicated Ter macrodomains during cell division. Binds specifically to matS, which is a 13 bp signature motif repeated within the Ter macrodomain. This is Macrodomain Ter protein from Escherichia coli O81 (strain ED1a).